A 67-amino-acid polypeptide reads, in one-letter code: DNA-directed RNA polymerases I, II, and III subunit RPABC5 (67 aa).

Residues Cys7, Cys10, Cys44, and Cys45 each contribute to the Zn(2+) site.

This sequence belongs to the archaeal Rpo10/eukaryotic RPB10 RNA polymerase subunit family. Component of the RNA polymerase I (Pol I), RNA polymerase II (Pol II) and RNA polymerase III (Pol III) complexes consisting of at least 13, 12 and 17 subunits, respectively. Pol I complex consists of a ten-subunit catalytic core composed of POLR1A/RPA1, POLR1B/RPA2, POLR1C/RPAC1, POLR1D/RPAC2, POLR1H/RPA12, POLR2E/RPABC1, POLR2F/RPABC2, POLR2H/RPABC3, POLR2K/RPABC4 and POLR2L/RPABC5; a mobile stalk subunit POLR1F/RPA43 protruding from the core and additional subunits homologous to general transcription factors POLR1E/RPA49 and POLR1G/RPA34. Part of Pol I pre-initiation complex (PIC), in which Pol I core assembles with RRN3 and promoter-bound UTBF and SL1/TIF-IB complex. Pol II complex contains a ten-subunit catalytic core composed of POLR2A/RPB1, POLR2B/RPB2, POLR2C/RPB3, POLR2I/RPB9, POLR2J/RPB11, POLR2E/RPABC1, POLR2F/RPABC2, POLR2H/RPABC3, POLR2K/RPABC4 and POLR2L/RPABC5 and a mobile stalk composed of two subunits POLR2D/RPB4 and POLR2G/RPB7. Part of Pol II(G) complex, in which Pol II core associates with an additional subunit POLR2M; unlike conventional Pol II, Pol II(G) functions as a transcriptional repressor. Part of TBP-based Pol II pre-initiation complex (PIC), in which Pol II core assembles with general transcription factors and other specific initiation factors including GTF2E1, GTF2E2, GTF2F1, GTF2F2, TCEA1, ERCC2, ERCC3, GTF2H2, GTF2H3, GTF2H4, GTF2H5, GTF2A1, GTF2A2, GTF2B and TBP; this large multi-subunit PIC complex mediates DNA unwinding and targets Pol II core to the transcription start site where the first phosphodiester bond forms. Pol III complex consists of a ten-subunit catalytic core composed of POLR3A/RPC1, POLR3B/RPC2, POLR1C/RPAC1, POLR1D/RPAC2, POLR3K/RPC10, POLR2E/RPABC1, POLR2F/RPABC2, POLR2H/RPABC3, POLR2K/RPABC4 and POLR2L/RPABC5; a mobile stalk composed of two subunits POLR3H/RPC8 and CRCP/RPC9, protruding from the core and functioning primarily in transcription initiation; and additional subunits homologous to general transcription factors of the RNA polymerase II machinery, POLR3C/RPC3-POLR3F/RPC6-POLR3G/RPC7 heterotrimer required for transcription initiation and POLR3D/RPC4-POLR3E/RPC5 heterodimer involved in both transcription initiation and termination.

Its subcellular location is the nucleus. The protein localises to the nucleolus. In terms of biological role, DNA-dependent RNA polymerase catalyzes the transcription of DNA into RNA using the four ribonucleoside triphosphates as substrates. Common component of RNA polymerases I, II and III which synthesize ribosomal RNA precursors, mRNA precursors and many functional non-coding RNAs, and a small RNAs, such as 5S rRNA and tRNAs, respectively. The polypeptide is DNA-directed RNA polymerases I, II, and III subunit RPABC5 (POLR2L) (Bos taurus (Bovine)).